Consider the following 330-residue polypeptide: 2-alkyl-3-oxoalkanoate reductase (330 aa).

Residue Tyr-139 is the Proton acceptor of the active site. Lys-143 contacts NADP(+).

The protein belongs to the 3-beta-HSD family. As to quaternary structure, homodimer.

It catalyses the reaction a (2R,3S)-2-alkyl-3-hydroxyalkanoate + NADP(+) = an (R)-2-alkyl-3-oxoalkanoate + NADPH + H(+). In terms of biological role, involved in olefin biosynthesis. Catalyzes the reversible stereospecific NADPH-dependent reduction of 2-alkyl-3-oxoalkanoic acids to 2-alkyl-3-hydroxyalkanoic acids. In the oxidative direction, syn-2-decyl-3-hydroxytetradecanoic acid is the preferred substrate. In the reductive direction, (2R/S)-2-hexyl-3-ketodecanoic acid is accepted as substrate. The sequence is that of 2-alkyl-3-oxoalkanoate reductase from Stenotrophomonas maltophilia (strain K279a).